A 113-amino-acid chain; its full sequence is Large ribosomal subunit protein bL17 (113 aa).

The protein belongs to the bacterial ribosomal protein bL17 family. As to quaternary structure, part of the 50S ribosomal subunit. Contacts protein L32.

This is Large ribosomal subunit protein bL17 from Clostridium tetani (strain Massachusetts / E88).